The chain runs to 94 residues: Scorpine (94 aa).

A signal peptide spans 1–19 (MNSKLTALIFLGLIAIAYC). The region spanning 55–94 (EFQCMANMDMLGNCEKHCQTSGEKGYCHGTKCKCGTPLSY) is the BetaSPN-type CS-alpha/beta domain. Intrachain disulfides connect cysteine 58–cysteine 81, cysteine 68–cysteine 86, and cysteine 72–cysteine 88.

It belongs to the long chain scorpion toxin family. Class 3 subfamily. In terms of tissue distribution, expressed by the venom gland.

It is found in the secreted. The protein localises to the target cell membrane. This full-length protein shows antibacterial activity against B.subtilis and K.pneumoniae. Also shows a potent inhibitory effect on the ookinete (ED(50) 0.7 uM) and gamete (ED(50) 10 uM) stages of Plasmodium berghei development. In addition, induces cell membrane disruption, leakage currents and cell death on HEK293 cell line (tested at 25 uM). In Pandinus imperator (Emperor scorpion), this protein is Scorpine.